The sequence spans 529 residues: MGRMNVSMMRYLEGDHFRVLIAVEMGMKNHEVVPLALVSAIAGIHRGGVARTLNDLCKHSLVAFERSKKFDGYRLTIRGYDYLALRALCSREVVGSVGNQIGIGKESDVYVGGDPELNDLCLKFHRLGRTSFRKIKEKRDYHKKRKSASWLYLSRLAAAKEFAFLKALQERGFPVPKAVDVCRHLVVMQLVVGQTLCNVTHVEDAGALYDRLMALIVKMARHGVIHGDFNEFNLIMLEDERIVMIDFPQMVSIDHPNAEYYFDRDVTCVRTFFKRKFDYESEDWPKFDEVERKGNMDVLLEASGFTKKMALDLNKAYDEGDFLAHCEQELRNRQEEDLGEDEDDSDDSKSMEDIQEEPEDLEKDHEELQAQENTVKQQKIVLSQTTRFTDWLSDATNQLEAVDLDALKSEEGYKDIELPPEDFKRPADSENDDENDEDEEEGEEEDADGHVAVEEQVAKVVKKKRVPSGARSVASSAATFTAEDVKRRLALDRKRNKEKIRLKVKGKQSAVGRNRKDNKDVIAEYAGWI.

A Protein kinase domain is found at valine 97–phenylalanine 273. Lysine 123 contacts ATP. Residue aspartate 228 is the Proton acceptor of the active site. Disordered stretches follow at residues arginine 331–glutamate 366 and glutamate 411–alanine 452. A compositionally biased stretch (acidic residues) spans aspartate 337–aspartate 346. Residues glutamate 411–aspartate 428 show a composition bias toward basic and acidic residues. The segment covering serine 429–alanine 447 has biased composition (acidic residues).

This sequence belongs to the protein kinase superfamily. RIO-type Ser/Thr kinase family. Requires Mg(2+) as cofactor. In terms of tissue distribution, expressed in pharynx (metacorpus and posterior bulbus). Expression is restricted to adult stage.

The catalysed reaction is L-seryl-[protein] + ATP = O-phospho-L-seryl-[protein] + ADP + H(+). The enzyme catalyses L-threonyl-[protein] + ATP = O-phospho-L-threonyl-[protein] + ADP + H(+). Its function is as follows. Required for larval development. The sequence is that of Serine/threonine-protein kinase RIO2 from Caenorhabditis elegans.